The chain runs to 134 residues: Calvin cycle protein CP12-3, chloroplastic (134 aa).

Residues 1–21 (MISGSATASHGRVLLPSQRER) are disordered. A chloroplast-targeting transit peptide spans 1-42 (MISGSATASHGRVLLPSQRERRPVSTGSNILRFRETVPRQFS). 2 disulfides stabilise this stretch: Cys-78–Cys-87 and Cys-120–Cys-129.

It belongs to the CP12 family. As to quaternary structure, monomer. Component of a complex that contains two dimers of PRK, two tetramers of GAPDH and CP12. CP12 associates with GAPDH, causing its conformation to change. This GAPDH/CP12 complex binds PRK to form a half-complex (one unit). This unit probably dimerizes due partially to interactions between the enzymes of each unit. Post-translationally, contains two disulfide bonds; only the oxidized protein, with two disulfide bonds, is active in complex formation. The C-terminal disulfide is involved in the interaction with GAPDH and the N-terminal disulfide mediates the binding of PRK with this binary complex. As to expression, mostly expressed, at low levels, in stems and, to a lesser extent, in leaves and roots.

The protein resides in the plastid. Its subcellular location is the chloroplast. In terms of biological role, acts as a linker essential in the assembly of a core complex of PRK/GAPDH. Coordinates the reversible inactivation of chloroplast enzymes GAPDH and PRK during darkness in photosynthetic tissues. This is Calvin cycle protein CP12-3, chloroplastic (CP12-3) from Arabidopsis thaliana (Mouse-ear cress).